Here is a 400-residue protein sequence, read N- to C-terminus: Phosphoglycerate kinase (400 aa).

Substrate-binding positions include 23 to 25 (DLN), Arg-38, 61 to 64 (HFGR), Arg-120, and Arg-153. Residues Lys-203, Glu-325, and 355–358 (GGDT) contribute to the ATP site.

The protein belongs to the phosphoglycerate kinase family. Monomer.

The protein localises to the cytoplasm. The enzyme catalyses (2R)-3-phosphoglycerate + ATP = (2R)-3-phospho-glyceroyl phosphate + ADP. It functions in the pathway carbohydrate degradation; glycolysis; pyruvate from D-glyceraldehyde 3-phosphate: step 2/5. This Methylobacterium radiotolerans (strain ATCC 27329 / DSM 1819 / JCM 2831 / NBRC 15690 / NCIMB 10815 / 0-1) protein is Phosphoglycerate kinase.